The primary structure comprises 301 residues: Phospholipase A1 (301 aa).

C4 and C87 are oxidised to a cystine. S137 functions as the Nucleophile in the catalytic mechanism. D165 acts as the Charge relay system in catalysis. Intrachain disulfides connect C176–C181 and C219–C228. The active-site Charge relay system is the H230. 3 disulfides stabilise this stretch: C245-C269, C246-C294, and C262-C267.

It belongs to the AB hydrolase superfamily. Lipase family. In terms of tissue distribution, expressed by the venom gland.

It localises to the secreted. The enzyme catalyses a 1,2-diacyl-sn-glycero-3-phosphocholine + H2O = a 2-acyl-sn-glycero-3-phosphocholine + a fatty acid + H(+). Functionally, catalyzes the hydrolysis of phosphatidylcholine with phospholipase A1 activity. May act as an allergen and induce hemolytic activity. The polypeptide is Phospholipase A1 (Vespa crabro (European hornet)).